The sequence spans 356 residues: Na(+)/H(+) exchange regulatory cofactor NHE-RF1 (356 aa).

The residue at position 2 (serine 2) is an N-acetylserine. Phosphoserine is present on residues serine 2 and serine 46. A PDZ 1 domain is found at 14-94 (LCCLEKGPNG…AVRLLVVDPE (81 aa)). Residues 113–142 (AQEKSEHTEPPAAADTKKAGDQNEAEKSHL) are disordered. One can recognise a PDZ 2 domain in the interval 151 to 231 (LCTMKKGPNG…EAKLLVVDKE (81 aa)). The tract at residues 265–356 (NSREALVEPA…SKKNELFSNL (92 aa)) is disordered. Serine 266, serine 277, serine 287, and serine 288 each carry phosphoserine. Over residues 272–288 (EPASESPRPALARSASS) the composition is skewed to low complexity. Threonine 290 carries the post-translational modification Phosphothreonine. Phosphoserine is present on residues serine 291 and serine 299. The span at 307-317 (EPSSTSSSSDP) shows a compositional bias: low complexity. Residues 346 to 356 (WSKKNELFSNL) are compositionally biased toward basic and acidic residues.

In terms of assembly, homodimer, and heterodimer with NHERF2. Binds the N-termini of EZR, RDX and MSN. Binds the C-termini of PDGFRA, PDGFRB, ADRB2, NOS2 and CFTR. Binds ARHGAP17, EPI64, RACK1, OPRK1, GNAQ, CTNNB1 and PLCB3. Binds PDZK1. Interacts with CLCN3. Binds the C-terminus of PAG1. In resting T-cells, part of a PAG1-NHERF1-MSN complex which is disrupted upon TCR activation. Forms a complex with CFTR and SLC4A7. Forms a complex with SLC4A7 and ATP6V1B1. Interacts with TRPC4 (via the PDZ-binding domain). Directly interacts with HTR4. Interacts (via the PDZ 1 domain) with PODXL (via the C-terminal PDZ-binding motif DTHL); interaction is not detected in glomerular epithelium cells. Interacts (via the PDZ 1 domain) with PODXL (via the C-terminal PDZ-binding motif DTHL); the interaction take place early in the secretory pathway and is necessary for its apical membrane sorting. Interacts with SLC26A3. Interacts with MCC. Interacts with SLC34A1. Interacts (via the PDZ domains) with SLC26A6 isoform 4 and isoform 5. Interacts (via PDZ domains) with ACE2 (via PDZ-binding motif); the interaction may enhance ACE2 membrane residence.

It localises to the cytoplasm. It is found in the apical cell membrane. The protein localises to the cell projection. The protein resides in the filopodium. Its subcellular location is the ruffle. It localises to the microvillus. It is found in the endomembrane system. Scaffold protein that connects plasma membrane proteins with members of the ezrin/moesin/radixin family and thereby helps to link them to the actin cytoskeleton and to regulate their surface expression. Necessary for recycling of internalized ADRB2. Was first known to play a role in the regulation of the activity and subcellular location of SLC9A3. Necessary for cAMP-mediated phosphorylation and inhibition of SLC9A3. Involved in sperm capacitation. May participate in the regulation of the chloride and bicarbonate homeostasis in spermatozoa. May enhance Wnt signaling. May participate in HTR4 targeting to microvilli. Involved in the regulation of phosphate reabsorption in the renal proximal tubules. This Rattus norvegicus (Rat) protein is Na(+)/H(+) exchange regulatory cofactor NHE-RF1 (Nherf1).